The following is a 1088-amino-acid chain: Protocadherin-19 (1088 aa).

An N-terminal signal peptide occupies residues 1-24; that stretch reads MHSKDMDFVQMFVCFLLCWTGVDA. The Extracellular segment spans residues 25-678; that stretch reads VFNLKYTVEE…QEQIGPVNLS (654 aa). Cadherin domains are found at residues 31-130, 131-239, 240-347, 351-454, 455-563, and 569-676; these read TVEE…APRF, PTNH…NPVF, DEPV…APEI, SENS…PPYF, TKPH…TPVM, and VNGT…GPVN. Positions 34 and 35 each coordinate Ca(2+). N-linked (GlcNAc...) asparagine glycosylation is present at asparagine 44. Ca(2+) is bound by residues aspartate 89 and aspartate 91. An intrachain disulfide couples cysteine 94 to cysteine 100. The Ca(2+) site is built by aspartate 122, valine 123, asparagine 124, aspartate 125, asparagine 126, glutamate 141, aspartate 156, aspartate 158, asparagine 162, glutamate 200, aspartate 213, aspartate 231, serine 232, asparagine 233, aspartate 234, asparagine 235, and glutamate 250. The N-linked (GlcNAc...) asparagine glycan is linked to asparagine 262. The Ca(2+) site is built by aspartate 265, aspartate 267, and asparagine 271. An N-linked (GlcNAc...) asparagine glycan is attached at asparagine 284. Ca(2+) is bound by residues aspartate 306, glutamate 308, aspartate 339, isoleucine 340, asparagine 341, aspartate 342, asparagine 343, glutamate 361, and aspartate 376. Residue asparagine 377 is glycosylated (N-linked (GlcNAc...) asparagine). Ca(2+) contacts are provided by aspartate 378, asparagine 382, aspartate 413, and glutamate 415. A glycan (N-linked (GlcNAc...) asparagine) is linked at asparagine 421. Ca(2+)-binding residues include aspartate 428, aspartate 446, glutamate 447, asparagine 448, aspartate 449, asparagine 450, glutamate 465, aspartate 480, aspartate 482, asparagine 486, asparagine 522, glutamate 524, and aspartate 537. Asparagine 486 carries N-linked (GlcNAc...) asparagine glycosylation. N-linked (GlcNAc...) asparagine glycosylation occurs at asparagine 546. Aspartate 555, valine 556, asparagine 557, aspartate 558, and asparagine 559 together coordinate Ca(2+). Asparagine 570 carries an N-linked (GlcNAc...) asparagine glycan. The Ca(2+) site is built by aspartate 594, aspartate 596, asparagine 600, and aspartate 646. Asparagine 676 carries N-linked (GlcNAc...) asparagine glycosylation. The chain crosses the membrane as a helical span at residues 679–699; the sequence is LIFIIALGSIAVILFVTMIFV. Over 700-1088 the chain is Cytoplasmic; that stretch reads AVKCKRDNKE…GSKRLKDIVL (389 aa). 4 disordered regions span residues 792-813, 851-875, 970-1032, and 1067-1088; these read NSRNAAPNHGYHHTFTGQGPQQ, DMEGNSLKDSGHEESDQTDSEHDVQ, TFGK…ASST, and TLLQDGRDKESPGSKRLKDIVL. Basic and acidic residues predominate over residues 859-875; it reads DSGHEESDQTDSEHDVQ. Over residues 1071–1088 the composition is skewed to basic and acidic residues; it reads DGRDKESPGSKRLKDIVL.

Homodimer; antiparallel. Interacts with cadherin cdh2; the interaction confers robust cell adhesion activity on pcdh19. In the embryo, strongly expressed in the developing nervous system. At 12 hours post fertilization (hpf), shows a segmental expression pattern in the anterior third of the neural keel with strong expression in the presumptive forebrain, cerebellum/rhombomere 1 and rhombomere 4. By 24 hpf, expressed widely in the brain and spinal cord with higher expression levels in the ventral telencephalon, dorsal and central thalamus, optic tectum, central tegmentum, cerebellum and dorsolateral regions of the hindbrain. As development proceeds, expression becomes restricted to the dorsal and/or lateral regions of the central nervous system. Not detected in the spinal cord of two- and three-day old embryos. Expressed in the eye primordium, developing retina, lens and otic vesicle. Expressed in the larval optic tectum at 4 days post-fertilization where it localizes in discrete columns of neurons. Expressed throughout the adult brain with strong expression in the ventromedial telencephalon, periventricular regions of the thalamus and anterior hypothalamus, stratum periventriculare of the optic tectum, dorsal tegmental nucleus, granular regions of the cerebellar body and valvula, and superficial layers of the facial and vagal lobes.

It is found in the cell membrane. Functionally, calcium-dependent cell-adhesion protein. Essential for the early stages of neurulation in the anterior neural plate. Shows little cell adhesion activity on its own but exhibits robust homophilic cell adhesion when in a complex with cadherin cdh2 and appears to mediate the adhesion while cdh2 acts as a cell adhesion cofactor in the complex. Functions with cdh2 to coordinate cell adhesion and cell movements during neurulation. Contributes to neural progenitor cell patterning with cdh2 by promoting homophilic cell interactions. Regulates the columnar organization of neurons in the optic tectum. The protein is Protocadherin-19 of Danio rerio (Zebrafish).